Reading from the N-terminus, the 250-residue chain is MILYEYPFNERVRAYLRLEYLFDRLFYFAREGDARHHQIAVATLFDILDATERTDIKTSVLQDLERQRAALQALRDHPGVAQDALESMLAEMERTVSGLAGQGRAGQPLRENEWLVSLRGRLAVPGGATQVDMPSYHAWQHRTEAVRCADLQTWTAPLRPLHDAVAMALRLLRESGRRSEIVAEQGGYQQMLAGKLFQLLRVWIDPAQGVFPEISANKYMIWIRFSAQDGDAKPQQVARNIDFQMSLCSS.

The protein belongs to the ZapD family. In terms of assembly, interacts with FtsZ.

The protein localises to the cytoplasm. Cell division factor that enhances FtsZ-ring assembly. Directly interacts with FtsZ and promotes bundling of FtsZ protofilaments, with a reduction in FtsZ GTPase activity. This chain is Cell division protein ZapD, found in Bordetella petrii (strain ATCC BAA-461 / DSM 12804 / CCUG 43448).